Reading from the N-terminus, the 202-residue chain is Small ribosomal subunit protein uS5 (202 aa).

One can recognise an S5 DRBM domain in the interval 50–113 (LKQELLNVNI…REAKLNLIPV (64 aa)).

The protein belongs to the universal ribosomal protein uS5 family. Part of the 30S ribosomal subunit. Contacts protein S4.

In terms of biological role, with S4 and S12 plays an important role in translational accuracy. This is Small ribosomal subunit protein uS5 from Pyrobaculum arsenaticum (strain DSM 13514 / JCM 11321 / PZ6).